We begin with the raw amino-acid sequence, 337 residues long: Homeobox protein knotted-1-like 4 (337 aa).

2 disordered regions span residues 1–56 (MEQQ…SFHE) and 159–190 (FTLDDNGSEGGNSSEDEQEAGGGDMASAGLPE). Over residues 27-38 (PTSTSTSPAVPS) the composition is skewed to low complexity. Residues 200-220 (ELKSHLLNKYSGYLSSLWREL) enclose the ELK domain. Residues 221–284 (SKKKKKGKLP…NQRKRHWKPT (64 aa)) constitute a DNA-binding region (homeobox; TALE-type).

The protein belongs to the TALE/KNOX homeobox family.

It is found in the nucleus. The polypeptide is Homeobox protein knotted-1-like 4 (OSH10) (Oryza sativa subsp. japonica (Rice)).